The sequence spans 399 residues: Tyrosine--tRNA ligase 2 (399 aa).

Residues 41-50 carry the 'HIGH' region motif; it reads PTAPDLHLGH. The short motif at 225-229 is the 'KMSKS' region element; sequence KMSKS. An ATP-binding site is contributed by Lys228. Positions 336-398 constitute an S4 RNA-binding domain; the sequence is ILIANLLKEA…GKRKFANITV (63 aa).

This sequence belongs to the class-I aminoacyl-tRNA synthetase family. TyrS type 2 subfamily. As to quaternary structure, homodimer.

It is found in the cytoplasm. It catalyses the reaction tRNA(Tyr) + L-tyrosine + ATP = L-tyrosyl-tRNA(Tyr) + AMP + diphosphate + H(+). In terms of biological role, catalyzes the attachment of tyrosine to tRNA(Tyr) in a two-step reaction: tyrosine is first activated by ATP to form Tyr-AMP and then transferred to the acceptor end of tRNA(Tyr). This Pseudoalteromonas translucida (strain TAC 125) protein is Tyrosine--tRNA ligase 2.